A 177-amino-acid chain; its full sequence is TRAF-interacting protein with FHA domain-containing protein A (177 aa).

The FHA domain occupies 48-104 (VAFGRDYNVCRYPLLSNRVSRIQFNLQFFKHFNCSTTAIEIKNLSKKNKLYVDNLEL).

The protein belongs to the TIFA family. As to quaternary structure, interacts with traf6.

It is found in the cytoplasm. Adapter molecule that plays a key role in the activation of pro-inflammatory NF-kappa-B signaling following detection of bacterial pathogen-associated molecular pattern metabolites (PAMPs). Promotes activation of an innate immune response by inducing the oligomerization and polyubiquitination of TRAF6, which leads to the activation of TAK1 and IKK through a proteasome-independent mechanism. The protein is TRAF-interacting protein with FHA domain-containing protein A of Xenopus tropicalis (Western clawed frog).